A 324-amino-acid chain; its full sequence is Putative exosome complex exonuclease RRP42 (324 aa).

Belongs to the RNase PH family. Component of the RNA exosome complex.

Its subcellular location is the nucleus. The protein resides in the nucleolus. It is found in the cytoplasm. In terms of biological role, non-catalytic component of the RNA exosome complex which has 3'-&gt;5' exoribonuclease activity and participates in a multitude of cellular RNA processing and degradation events. In Dictyostelium discoideum (Social amoeba), this protein is Putative exosome complex exonuclease RRP42 (exosc7).